A 463-amino-acid chain; its full sequence is Phosphoglucosamine mutase (463 aa).

S108 (phosphoserine intermediate) is an active-site residue. The Mg(2+) site is built by S108, D247, D249, and D251. Residue S108 is modified to Phosphoserine.

Belongs to the phosphohexose mutase family. Mg(2+) serves as cofactor. Activated by phosphorylation.

The catalysed reaction is alpha-D-glucosamine 1-phosphate = D-glucosamine 6-phosphate. In terms of biological role, catalyzes the conversion of glucosamine-6-phosphate to glucosamine-1-phosphate. In Nitrosospira multiformis (strain ATCC 25196 / NCIMB 11849 / C 71), this protein is Phosphoglucosamine mutase.